A 463-amino-acid polypeptide reads, in one-letter code: Steroidogenic factor 1 (463 aa).

The segment at residues 10 to 85 is a DNA-binding region (nuclear receptor); the sequence is DELCPVCGDK…VGMRLEAVRA (76 aa). The NR C4-type zinc-finger motif lies at 13-33; the sequence is CPVCGDKVSGYHYGLLTCESC. Residues Lys-34, Lys-38, and Lys-72 each carry the N6-acetyllysine modification. Residues 49 to 73 form an NR C4-type zinc finger; the sequence is CTESQNCKIDKTQRKRCPYCRFQKC. Residue Lys-119 forms a Glycyl lysine isopeptide (Lys-Gly) (interchain with G-Cter in SUMO) linkage. Positions 119–160 are disordered; it reads KLETGPSMGPPPQTDYPLAPALHPGAKGLAPAPPAGPPGDYE. The span at 135–148 shows a compositional bias: low complexity; that stretch reads PLAPALHPGAKGLA. Residue Lys-193 forms a Glycyl lysine isopeptide (Lys-Gly) (interchain with G-Cter in SUMO) linkage. The disordered stretch occupies residues 197 to 216; the sequence is PEPYASPHEPAPPYGYPEPY. Ser-202 is modified (phosphoserine; by CDK7). Residues 205 to 216 show a composition bias toward pro residues; that stretch reads EPAPPYGYPEPY. The NR LBD domain maps to 224-461; sequence GVPELILKLL…NLLIEMLHAK (238 aa). A 1,2-diacyl-sn-glycero-3-phosphocholine is bound by residues Gly-343, Tyr-438, and Lys-442.

The protein belongs to the nuclear hormone receptor family. NR5 subfamily. As to quaternary structure, binds DNA as a monomer. Part of a complex consisting of SFPQ, NONO and NR5A1. Interacts with NR0B2, NCOA2 and PPARGC1A. Interacts with DGKQ and CDK7. Binds to and activated by HIPK3. Acetylation stimulates the transcriptional activity. In terms of processing, sumoylation reduces CDK7-mediated phosphorylation on Ser-202. Post-translationally, phosphorylated on Ser-202 by CDK7. This phosphorylation promotes transcriptional activity. As to expression, expressed in the pre-granulosa and Sertoli cells of the ovary and testis, respectively. In the testis it is also present in the interstitial cells. In the adult ovary it is expressed in the interstitial gland, and in the granulosa cells and theca interna of small to medium-sized antral follicles, but is not expressed in large antral follicles.

Its subcellular location is the nucleus. Its function is as follows. Transcriptional activator. Seems to be essential for sexual differentiation and formation of the primary steroidogenic tissues. Binds to the Ad4 site found in the promoter region of steroidogenic P450 genes such as CYP11A, CYP11B and CYP21B. Also regulates the AMH/Muellerian inhibiting substance gene as well as the AHCH and STAR genes. 5'-YCAAGGYC-3' and 5'-RRAGGTCA-3' are the consensus sequences for the recognition by NR5A1. The SFPQ-NONO-NR5A1 complex binds to the CYP17 promoter and regulates basal and cAMP-dependent transcriptional activity. Binds phosphatidylcholine and phospholipids with a phosphatidylinositol (PI) headgroup, in particular PI(3,4)P2 and PI(3,4,5)P3. Activated by the phosphorylation of NR5A1 by HIPK3 leading to increased steroidogenic gene expression upon cAMP signaling pathway stimulation. The polypeptide is Steroidogenic factor 1 (NR5A1) (Notamacropus eugenii (Tammar wallaby)).